We begin with the raw amino-acid sequence, 254 residues long: Tabinhibitin 6 (254 aa).

The N-terminal stretch at 1 to 22 is a signal peptide; sequence MLPYWCPLLLAALVLQYATIDA. Residues 31–33 carry the Cell attachment site motif; it reads RGD. The 145-residue stretch at 66-210 folds into the SCP domain; the sequence is LSKINDVRDH…KARALLTCNF (145 aa).

It belongs to the CRISP family. As to expression, expressed in salivary glands.

It is found in the secreted. Its function is as follows. Inhibits platelet aggregation induced by all agonists tested (ADP, arachidonic acid, the thromboxane A2 analog U46619, thrombin, and snake venom snaclecs (TMVA that activates platelet through GPIB, and stejnulxin that specifically acts through GPVI (GP6))). May act by competing with fibrinogen for binding to glycoprotein IIb/IIIa (ITGA2B/ITGB3). This is Tabinhibitin 6 from Tabanus yao (Horsefly).